The primary structure comprises 467 residues: Variant surface glycoprotein 7 (467 aa).

Over residues 77-87 (TIAAGATNTKL) the composition is skewed to polar residues. The segment at 77–133 (TIAAGATNTKLSGHHPNQGRRGRRRSSSARPNNSKGNSPSKRAGGAVRGETPASGRL) is disordered. Residues 93-103 (NQGRRGRRRSS) show a composition bias toward basic residues. The segment covering 107-116 (PNNSKGNSPS) has biased composition (polar residues). N-linked (GlcNAc...) asparagine glycosylation is found at Asn108 and Asn252. The disordered stretch occupies residues 382–407 (AEKVENPRSQGNPETAENKKEGGNTA). Asn416 carries N-linked (GlcNAc...) asparagine glycosylation. Residue Asp444 is the site of GPI-anchor amidated aspartate attachment. A propeptide spans 445–467 (SSFLLSKQFALSVVSAAFAALLF) (removed in mature form).

It localises to the cell membrane. Functionally, VSG forms a coat on the surface of the parasite. The trypanosome evades the immune response of the host by expressing a series of antigenically distinct VSGs from an estimated 1000 VSG genes. The polypeptide is Variant surface glycoprotein 7 (Trypanosoma brucei rhodesiense).